Reading from the N-terminus, the 352-residue chain is Histidinol-phosphate aminotransferase (352 aa).

An N6-(pyridoxal phosphate)lysine modification is found at Lys-221.

This sequence belongs to the class-II pyridoxal-phosphate-dependent aminotransferase family. Histidinol-phosphate aminotransferase subfamily. As to quaternary structure, homodimer. Pyridoxal 5'-phosphate is required as a cofactor.

It catalyses the reaction L-histidinol phosphate + 2-oxoglutarate = 3-(imidazol-4-yl)-2-oxopropyl phosphate + L-glutamate. It participates in amino-acid biosynthesis; L-histidine biosynthesis; L-histidine from 5-phospho-alpha-D-ribose 1-diphosphate: step 7/9. This Staphylococcus aureus (strain Mu3 / ATCC 700698) protein is Histidinol-phosphate aminotransferase.